A 331-amino-acid polypeptide reads, in one-letter code: Ketol-acid reductoisomerase (NADP(+)) (331 aa).

The KARI N-terminal Rossmann domain maps to 2 to 182 (AKMYYDQDAD…GGTKAGAIET (181 aa)). NADP(+) is bound by residues 25 to 28 (FGSQ), Ser51, Ser53, and 83 to 86 (DEKQ). His108 is an active-site residue. Residue Gly134 participates in NADP(+) binding. Positions 183 to 328 (TFKEETETDL…KSLREMMPWL (146 aa)) constitute a KARI C-terminal knotted domain. Residues Asp191, Glu195, Glu227, and Glu231 each coordinate Mg(2+). Position 252 (Ser252) interacts with substrate.

This sequence belongs to the ketol-acid reductoisomerase family. Requires Mg(2+) as cofactor.

The enzyme catalyses (2R)-2,3-dihydroxy-3-methylbutanoate + NADP(+) = (2S)-2-acetolactate + NADPH + H(+). It carries out the reaction (2R,3R)-2,3-dihydroxy-3-methylpentanoate + NADP(+) = (S)-2-ethyl-2-hydroxy-3-oxobutanoate + NADPH + H(+). Its pathway is amino-acid biosynthesis; L-isoleucine biosynthesis; L-isoleucine from 2-oxobutanoate: step 2/4. It functions in the pathway amino-acid biosynthesis; L-valine biosynthesis; L-valine from pyruvate: step 2/4. Involved in the biosynthesis of branched-chain amino acids (BCAA). Catalyzes an alkyl-migration followed by a ketol-acid reduction of (S)-2-acetolactate (S2AL) to yield (R)-2,3-dihydroxy-isovalerate. In the isomerase reaction, S2AL is rearranged via a Mg-dependent methyl migration to produce 3-hydroxy-3-methyl-2-ketobutyrate (HMKB). In the reductase reaction, this 2-ketoacid undergoes a metal-dependent reduction by NADPH to yield (R)-2,3-dihydroxy-isovalerate. The chain is Ketol-acid reductoisomerase (NADP(+)) from Caldanaerobacter subterraneus subsp. tengcongensis (strain DSM 15242 / JCM 11007 / NBRC 100824 / MB4) (Thermoanaerobacter tengcongensis).